We begin with the raw amino-acid sequence, 206 residues long: Large ribosomal subunit protein uL4 (206 aa).

Residues 63–97 are disordered; sequence MYKQKGTGRARHHSARAPQFRGGGKAHGPVVRSHE. Residues 64–77 are compositionally biased toward basic residues; that stretch reads YKQKGTGRARHHSA.

The protein belongs to the universal ribosomal protein uL4 family. Part of the 50S ribosomal subunit.

Functionally, one of the primary rRNA binding proteins, this protein initially binds near the 5'-end of the 23S rRNA. It is important during the early stages of 50S assembly. It makes multiple contacts with different domains of the 23S rRNA in the assembled 50S subunit and ribosome. In terms of biological role, forms part of the polypeptide exit tunnel. This chain is Large ribosomal subunit protein uL4, found in Rhizobium etli (strain ATCC 51251 / DSM 11541 / JCM 21823 / NBRC 15573 / CFN 42).